A 309-amino-acid polypeptide reads, in one-letter code: Porphobilinogen deaminase (309 aa).

Residue C242 is modified to S-(dipyrrolylmethanemethyl)cysteine.

It belongs to the HMBS family. As to quaternary structure, monomer. Dipyrromethane serves as cofactor.

It carries out the reaction 4 porphobilinogen + H2O = hydroxymethylbilane + 4 NH4(+). It functions in the pathway porphyrin-containing compound metabolism; protoporphyrin-IX biosynthesis; coproporphyrinogen-III from 5-aminolevulinate: step 2/4. Its function is as follows. Tetrapolymerization of the monopyrrole PBG into the hydroxymethylbilane pre-uroporphyrinogen in several discrete steps. The sequence is that of Porphobilinogen deaminase from Syntrophobacter fumaroxidans (strain DSM 10017 / MPOB).